A 103-amino-acid chain; its full sequence is Astacin-like peptidase p16 (103 aa).

One can recognise a Peptidase M12A domain in the interval 1 to 103 (NAIPGQHYRW…DAFSRDGSPM (103 aa)).

The cofactor is Zn(2+).

In terms of biological role, active against casein. Has a role as a digestive enzyme. The polypeptide is Astacin-like peptidase p16 (Argiope aurantia (Black-and-yellow garden spider)).